A 201-amino-acid polypeptide reads, in one-letter code: Putative 3-methyladenine DNA glycosylase (201 aa).

This sequence belongs to the DNA glycosylase MPG family.

This chain is Putative 3-methyladenine DNA glycosylase, found in Trichodesmium erythraeum (strain IMS101).